Consider the following 348-residue polypeptide: tRNA N6-adenosine threonylcarbamoyltransferase (348 aa).

Residues H111 and H115 each coordinate Fe cation. Substrate-binding positions include 134–138, D167, G180, D184, and N280; that span reads LVSGG. A Fe cation-binding site is contributed by D308.

Belongs to the KAE1 / TsaD family. Requires Fe(2+) as cofactor.

It localises to the cytoplasm. The enzyme catalyses L-threonylcarbamoyladenylate + adenosine(37) in tRNA = N(6)-L-threonylcarbamoyladenosine(37) in tRNA + AMP + H(+). Its function is as follows. Required for the formation of a threonylcarbamoyl group on adenosine at position 37 (t(6)A37) in tRNAs that read codons beginning with adenine. Is involved in the transfer of the threonylcarbamoyl moiety of threonylcarbamoyl-AMP (TC-AMP) to the N6 group of A37, together with TsaE and TsaB. TsaD likely plays a direct catalytic role in this reaction. The chain is tRNA N6-adenosine threonylcarbamoyltransferase from Rippkaea orientalis (strain PCC 8801 / RF-1) (Cyanothece sp. (strain PCC 8801)).